The sequence spans 235 residues: MVKTVNGEPLRHRPLQFNDIERVTEVSLLAFSDSATWKWRFKGMSSETMKALTMQLTRDAYFDPHVTCIVAYTDSNPYVGFLAFKKFPPDPNVSYRDWILKSLNKYYSNFLYWWYGAQIVQKRFHYNELQYGAALYKTGLLKNPKGFIHIHFVCVDPALQGNGVGGYLLDMAHDLADEYQIPCFLMASKMAFKMYEHLGYKTSVIANLVDEDTGELIRESPGMIREPKQPSSHET.

The N-acetyltransferase domain maps to 82 to 221 (LAFKKFPPDP…DTGELIRESP (140 aa)).

Belongs to the acetyltransferase family.

It is found in the golgi apparatus membrane. The protein resides in the endoplasmic reticulum membrane. This is an uncharacterized protein from Schizosaccharomyces pombe (strain 972 / ATCC 24843) (Fission yeast).